The following is a 129-amino-acid chain: Large ribosomal subunit protein bL19 (129 aa).

This protein is located at the 30S-50S ribosomal subunit interface and may play a role in the structure and function of the aminoacyl-tRNA binding site. The protein is Large ribosomal subunit protein bL19 of Rhodopseudomonas palustris (strain ATCC BAA-98 / CGA009).